Reading from the N-terminus, the 124-residue chain is Ribonuclease P protein component (124 aa).

The protein belongs to the RnpA family. As to quaternary structure, consists of a catalytic RNA component (M1 or rnpB) and a protein subunit.

The enzyme catalyses Endonucleolytic cleavage of RNA, removing 5'-extranucleotides from tRNA precursor.. In terms of biological role, RNaseP catalyzes the removal of the 5'-leader sequence from pre-tRNA to produce the mature 5'-terminus. It can also cleave other RNA substrates such as 4.5S RNA. The protein component plays an auxiliary but essential role in vivo by binding to the 5'-leader sequence and broadening the substrate specificity of the ribozyme. The polypeptide is Ribonuclease P protein component (Synechocystis sp. (strain ATCC 27184 / PCC 6803 / Kazusa)).